Reading from the N-terminus, the 382-residue chain is Lipid-A-disaccharide synthase (382 aa).

It belongs to the LpxB family.

The enzyme catalyses 2-N,3-O-bis[(3R)-3-hydroxytetradecanoyl]-alpha-D-glucosaminyl 1-phosphate + UDP-2-N,3-O-bis[(3R)-3-hydroxytetradecanoyl]-alpha-D-glucosamine = lipid A disaccharide (E. coli) + UDP + H(+). The catalysed reaction is a lipid X + a UDP-2-N,3-O-bis[(3R)-3-hydroxyacyl]-alpha-D-glucosamine = a lipid A disaccharide + UDP + H(+). It functions in the pathway glycolipid biosynthesis; lipid IV(A) biosynthesis; lipid IV(A) from (3R)-3-hydroxytetradecanoyl-[acyl-carrier-protein] and UDP-N-acetyl-alpha-D-glucosamine: step 5/6. Functionally, condensation of UDP-2,3-diacylglucosamine and 2,3-diacylglucosamine-1-phosphate to form lipid A disaccharide, a precursor of lipid A, a phosphorylated glycolipid that anchors the lipopolysaccharide to the outer membrane of the cell. In Shigella boydii serotype 18 (strain CDC 3083-94 / BS512), this protein is Lipid-A-disaccharide synthase.